Reading from the N-terminus, the 559-residue chain is Pentatricopeptide repeat-containing protein At4g38010 (559 aa).

PPR repeat units follow at residues 70–104, 105–139, 140–170, 171–201, 203–233, 238–268, 269–304, 305–339, 340–370, 371–405, 406–440, and 443–473; these read SSFS…GFSP, DMFT…GFYD, DIYV…MPVR, DVVS…MDVE, NLAT…ILKR, SLET…LEKK, DKVS…GIKP, DGHI…GIKW, DTHI…IRSK, NVFT…GFKP, NLVT…EYNL, and KLEH…MPVK. Residues 478 to 554 are type E motif; that stretch reads ICGAILSACK…VPGSSYIEKF (77 aa).

It belongs to the PPR family. PCMP-E subfamily.

The protein is Pentatricopeptide repeat-containing protein At4g38010 (PCMP-E45) of Arabidopsis thaliana (Mouse-ear cress).